A 348-amino-acid polypeptide reads, in one-letter code: Dihydroorotase (348 aa).

Zn(2+) is bound by residues His14 and His16. Substrate-binding positions include 16–18 (HLR) and Asn42. Zn(2+) contacts are provided by Lys100, His137, and His175. Lys100 bears the N6-carboxylysine mark. Substrate is bound at residue His137. Substrate is bound at residue Leu220. Asp248 is a Zn(2+) binding site. The active site involves Asp248. Residues His252 and Ala264 each contribute to the substrate site.

This sequence belongs to the metallo-dependent hydrolases superfamily. DHOase family. Class II DHOase subfamily. As to quaternary structure, homodimer. Zn(2+) serves as cofactor.

It carries out the reaction (S)-dihydroorotate + H2O = N-carbamoyl-L-aspartate + H(+). The protein operates within pyrimidine metabolism; UMP biosynthesis via de novo pathway; (S)-dihydroorotate from bicarbonate: step 3/3. In terms of biological role, catalyzes the reversible cyclization of carbamoyl aspartate to dihydroorotate. This is Dihydroorotase from Synechococcus sp. (strain CC9605).